Here is a 96-residue protein sequence, read N- to C-terminus: Co-chaperonin GroES 2 (96 aa).

The protein belongs to the GroES chaperonin family. In terms of assembly, heptamer of 7 subunits arranged in a ring. Interacts with the chaperonin GroEL.

The protein resides in the cytoplasm. Its function is as follows. Together with the chaperonin GroEL, plays an essential role in assisting protein folding. The GroEL-GroES system forms a nano-cage that allows encapsulation of the non-native substrate proteins and provides a physical environment optimized to promote and accelerate protein folding. GroES binds to the apical surface of the GroEL ring, thereby capping the opening of the GroEL channel. This is Co-chaperonin GroES 2 from Vibrio cholerae serotype O1 (strain ATCC 39315 / El Tor Inaba N16961).